The chain runs to 219 residues: Leukocyte surface antigen CD53 (219 aa).

The Cytoplasmic segment spans residues 1–11 (MGMSSLKLLKY). Residues 12-32 (VLFFFNLLFWICGCCILGFGI) form a helical membrane-spanning segment. Residues 33–54 (YLLIHNNFGVLFHNLPSLTLGN) lie on the Extracellular side of the membrane. Residues 55–69 (VFVIVGSIIMVVAFL) traverse the membrane as a helical segment. At 70–80 (GCMGSIKENKC) the chain is on the cytoplasmic side. Residues 81–106 (LLMSFFILLLIILLAEVTLAILLFVY) form a helical membrane-spanning segment. Over 107 to 181 (EQKLNEYVAK…AKARLWFHSN (75 aa)) the chain is Extracellular. N-linked (GlcNAc...) asparagine glycosylation is found at Asn129 and Asn148. Residues 182–206 (FLYIGIITICVCVIEVLGMSFALTL) form a helical membrane-spanning segment. The Cytoplasmic segment spans residues 207–219 (NCQIDKTSQTIGL).

The protein belongs to the tetraspanin (TM4SF) family. As to quaternary structure, interacts with SCIMP. Interacts with CD45/PTPRC. Interacts with IL7R. Interacts with RBL2 and PPP2CA. In terms of tissue distribution, B-cells, monocytes, macrophages, neutrophils, single (CD4 or CD8) positive thymocytes and peripheral T-cells.

It localises to the cell membrane. Its subcellular location is the cell junction. The protein resides in the membrane. It is found in the synapse. Structural component of specialized membrane microdomains known as tetraspanin-enriched microdomains (TERMs), which act as platforms for receptor clustering and signaling. Participates thereby in diverse biological functions such as cell signal transduction, adhesion, migration and protein trafficking. Plays a role in the activation of monocytes and B-cells. Acts as an essential regulator of B-cell development by promoting interleukin-7 receptor/IL7R signaling. Also promotes, in B-cells, the BCR signaling by recruiting PKC to the plasma membrane in order to phosphorylate its substrates. Plays an essential role in B- and T-cells homing to lymph nodes by stabilizing L-selectin/SELL cell surface expression. Also mediates metabolic and inflammatory functions in hepatocytes and adipose tissue by promoting TNF-alpha and LPS signaling independent of the immune compartment. This is Leukocyte surface antigen CD53 (CD53) from Homo sapiens (Human).